The sequence spans 220 residues: RNA-free ribonuclease P (220 aa).

This sequence belongs to the HARP family.

It carries out the reaction Endonucleolytic cleavage of RNA, removing 5'-extranucleotides from tRNA precursor.. In terms of biological role, RNA-free RNase P that catalyzes the removal of the 5'-leader sequence from pre-tRNA to produce the mature 5'-terminus. The protein is RNA-free ribonuclease P of Methanothermobacter thermautotrophicus (strain ATCC 29096 / DSM 1053 / JCM 10044 / NBRC 100330 / Delta H) (Methanobacterium thermoautotrophicum).